Here is a 690-residue protein sequence, read N- to C-terminus: Eukaryotic translation initiation factor 3 subunit B (690 aa).

Residues 1–11 (MAKKKSEDHSG) show a composition bias toward basic and acidic residues. Positions 1–33 (MAKKKSEDHSGADANDSDYNEEPNFDDPPNFVD) are disordered. Acidic residues predominate over residues 15–25 (NDSDYNEEPNF). The 85-residue stretch at 57-141 (SVVVVDNMPK…YTFAVNLFTD (85 aa)) folds into the RRM domain. WD repeat units follow at residues 207-246 (TRERFTDTFVKWSPLGTYVVTFHKPGVAIWGGSSFQKIQK), 292-331 (GDGMSVLSMFRWSHDDKYVARMGESSIHIYETPSFYLLDL), 334-369 (IKIPGIRGFSWSPTDNVIAYWVEEQNQIPARVTLMK), 442-484 (EIRE…KPSL), and 530-575 (PDHF…IKRT). Positions 613-646 (EQKDRLRLTRASKELLEKRAQLRETFMEYRNKRI) form a coiled coil.

It belongs to the eIF-3 subunit B family. As to quaternary structure, component of the eukaryotic translation initiation factor 3 (eIF-3) complex. The eIF-3 complex interacts with pix. Interacts with mxt.

The protein resides in the cytoplasm. Its function is as follows. RNA-binding component of the eukaryotic translation initiation factor 3 (eIF-3) complex, which is involved in protein synthesis of a specialized repertoire of mRNAs and, together with other initiation factors, stimulates binding of mRNA and methionyl-tRNAi to the 40S ribosome. The eIF-3 complex specifically targets and initiates translation of a subset of mRNAs involved in cell proliferation. The protein is Eukaryotic translation initiation factor 3 subunit B of Drosophila grimshawi (Hawaiian fruit fly).